The primary structure comprises 265 residues: MTIQKILKMKNKEKIVMVTAYDAPTAKILEKAGVDIILVGDSLGNNVLGYDSTIPVTLEEMIIHLQAVRRGAPNSFIVADLPFLSYGYSIEESVKNAGLLIKNGANAVKIEGGAQNCEIIQKCLNIGIPVMGHIGFTPQSLNMFGGYKVQGKEESAKKKLLDNALALENCGVFSIVLEMVTESIAKEITEKLSIPTIGIGAGRYCDGQVLVFHDIVGLNPEFKPKFSKMYANTFEIMLNAIEKFKMEVKDKTFPSKENVFEEGGK.

Positions 41 and 80 each coordinate Mg(2+). 3-methyl-2-oxobutanoate contacts are provided by residues 41–42 (DS), aspartate 80, and lysine 109. Position 111 (glutamate 111) interacts with Mg(2+). Residue glutamate 178 is the Proton acceptor of the active site.

Belongs to the PanB family. In terms of assembly, homodecamer; pentamer of dimers. Mg(2+) serves as cofactor.

It is found in the cytoplasm. It catalyses the reaction 3-methyl-2-oxobutanoate + (6R)-5,10-methylene-5,6,7,8-tetrahydrofolate + H2O = 2-dehydropantoate + (6S)-5,6,7,8-tetrahydrofolate. The protein operates within cofactor biosynthesis; (R)-pantothenate biosynthesis; (R)-pantoate from 3-methyl-2-oxobutanoate: step 1/2. Catalyzes the reversible reaction in which hydroxymethyl group from 5,10-methylenetetrahydrofolate is transferred onto alpha-ketoisovalerate to form ketopantoate. In Thermosipho africanus (strain TCF52B), this protein is 3-methyl-2-oxobutanoate hydroxymethyltransferase.